The primary structure comprises 131 residues: Protein NrdI (131 aa).

This sequence belongs to the NrdI family.

In terms of biological role, probably involved in ribonucleotide reductase function. In Bacillus licheniformis (strain ATCC 14580 / DSM 13 / JCM 2505 / CCUG 7422 / NBRC 12200 / NCIMB 9375 / NCTC 10341 / NRRL NRS-1264 / Gibson 46), this protein is Protein NrdI.